We begin with the raw amino-acid sequence, 2242 residues long: DEP domain-containing protein DDB_G0279099 (2242 aa).

9 disordered regions span residues 388–465, 576–644, 701–730, 871–965, 1077–1194, 1287–1336, 1384–1414, 1446–1471, and 1502–1521; these read SQNT…SNNS, DSNA…YSRV, PILR…FDQK, DPTT…TKKS, QLQL…AFNS, GSQQ…MNGS, SELL…ALPE, AQSS…NTSG, and SNNN…NSLN. Positions 392–440 form a coiled coil; it reads IQNNNNNNNNNNNNNNNNNNNNNNNNNNNNNNNNNNNNNSNNNKNNQNN. Over residues 581–614 the composition is skewed to low complexity; the sequence is GGNNNNNYNNNNGNGNGHNHNNHNNNNNNNNNND. Over residues 622 to 631 the composition is skewed to acidic residues; it reads EPSDFSDTED. Polar residues-rich tracts occupy residues 632 to 642 and 719 to 729; these read NSSTTPNSQYS and HPISPSNSFDQ. Residues 872 to 955 show a composition bias toward low complexity; that stretch reads PTTTTTTGGT…PNSSNTVPNS (84 aa). A coiled-coil region spans residues 1066–1101; sequence IPTVENNQHQQQLQLEQQEKEKEKARLAALEKKKPF. Basic and acidic residues predominate over residues 1082-1106; the sequence is QQEKEKEKARLAALEKKKPFPREDS. Composition is skewed to low complexity over residues 1108–1182 and 1287–1299; these read STLI…ATTA and GSQQ…GSQS. Residues 1300–1311 show a composition bias toward polar residues; the sequence is APTSPLTPHKNI. Composition is skewed to low complexity over residues 1312-1336, 1384-1410, and 1446-1470; these read NTNN…MNGS, SELL…GENN, and AQSS…TNTS. The 74-residue stretch at 1556 to 1629 folds into the DEP domain; sequence IGIKMTERKY…DGQFYYRLKE (74 aa). Residues 1645–1668 are compositionally biased toward low complexity; the sequence is TNNNFNNNNTNSNNNQQQQQQQQS. 4 disordered regions span residues 1645-1763, 1803-1910, 2122-2145, and 2165-2218; these read TNNN…SMSN, DEAN…QQQQ, NYNN…NLLK, and NSDT…KNEM. The span at 1669–1702 shows a compositional bias: polar residues; that stretch reads IPSVTSSAVNSPNKDSNTPDHSPISSPKQIGNKL. 2 stretches are compositionally biased toward low complexity: residues 1703 to 1760 and 1807 to 1848; these read SSSS…IQSS and GDNN…SSNS. A coiled-coil region spans residues 1791–1821; the sequence is LTNKEKDKEKEIDEANGDNNNNNNNNNNNNN. Composition is skewed to polar residues over residues 1849–1871 and 1879–1889; these read GQGS…TNPL and YGSSVQNSNQH. 2 stretches are compositionally biased toward low complexity: residues 1890–1910 and 2122–2133; these read QQQQ…QQQQ and NYNNNNNNNNNN. 2 stretches are compositionally biased toward basic and acidic residues: residues 2166-2181 and 2192-2218; these read SDTE…DNNH and DTDH…KNEM.

The protein in the N-terminal section; belongs to the IML1 family.

In Dictyostelium discoideum (Social amoeba), this protein is DEP domain-containing protein DDB_G0279099.